We begin with the raw amino-acid sequence, 194 residues long: Protein LKAAEAR1 (194 aa).

Residues 1–45 (MPPPAKEGGRKGPRERSGKSAPGTAQGEERAKGAPATEPPKPGWA) are disordered. Over residues 7 to 18 (EGGRKGPRERSG) the composition is skewed to basic and acidic residues.

In Homo sapiens (Human), this protein is Protein LKAAEAR1 (LKAAEAR1).